Consider the following 436-residue polypeptide: MDSGGASDPSRQVRVRFLTKLPAPLRAPPTSIAVPADLTRMGLSEIVNSLLLAASPDHQAQPFDFLVDGELVRLPLQEFLLAKGISVERVLELEYVKAVAPRKQEDPCPHDDWVSAVDGSNPSFVLTGCYDGLARIWRDASECTHILEGHSDGITSARFINKGETEDRLHVVTASKDRSLRLFKFDTSVSVPKQIGAYKILRGHTSSVQSVAVDPSTNMICSGSWDNSIKLWSVEGSEEDGDTVSVKKRRTNSDSSGPEESLFEGSATSTFLGHTQCVSAVTWPERQTIYSASWDHSVRQWDVQTGKETWNMVSGKALNCLDCGGESSSLIAAGGSDPVLRVWDPRKPGTLAPIFQFSSHKSWISACKWHPSSWFHLVSSSFDGKVMLWDLRTAWPLASVESHKDKVLCADWWKGDSVISGGADSKLCIASGIEIV.

The tract at residues 13-97 is ubiquitin-like (UBL) domain; the sequence is VRVRFLTKLP…ERVLELEYVK (85 aa). 7 WD repeats span residues 109–147, 149–193, 203–242, 273–311, 313–353, 359–399, and 402–436; these read PHDDWVSAVDGSNPSFVLTGCYDGLARIWRDASECTHIL, GHSD…SVPK, GHTSSVQSVAVDPSTNMICSGSWDNSIKLWSVEGSEEDGD, GHTQCVSAVTWPERQTIYSASWDHSVRQWDVQTGKETWN, VSGK…TLAP, SHKS…PLAS, and SHKDKVLCADWWKGDSVISGGADSKLCIASGIEIV. Residues 240–262 form a disordered region; the sequence is DGDTVSVKKRRTNSDSSGPEESL.

Belongs to the WD repeat WDR12/YTM1 family.

It localises to the nucleus. The protein resides in the nucleolus. Its subcellular location is the nucleoplasm. Functionally, required for maturation of ribosomal RNAs and formation of the large ribosomal subunit. The protein is Ribosome biogenesis protein WDR12 homolog of Oryza sativa subsp. japonica (Rice).